The following is a 545-amino-acid chain: Toxin BC_0920 (545 aa).

The LXG domain maps to 1–217; sequence MSLNMYLGEV…ARQAANSIEE (217 aa).

It in the N-terminal section; belongs to the LXG family. In the C-terminal section; belongs to the bacterial EndoU family. In terms of assembly, probably interacts with cognate immunity protein BC_0921. The interaction inhibits the toxic activity of BC_0921.

The protein localises to the secreted. In terms of biological role, toxic component of an LXG toxin-immunity module. The C-terminus (residues 322-545) has RNase activity in E.coli which is neutralized by cognate immunity protein BC_0921, but not by immunity proteins specific to other toxins with the LXG domain. Degrades 5S rRNA and several tRNAs in vitro; cleavage is endonucleolytic within the anticodon loop for tRNA(GAU-Ile) and tRNA(UUC-Glu) but total for 5S rRNA and at least one other tRNA. RNase activity is suppressed by cognate immunity protein BC_0921. The polypeptide is Toxin BC_0920 (Bacillus cereus (strain ATCC 14579 / DSM 31 / CCUG 7414 / JCM 2152 / NBRC 15305 / NCIMB 9373 / NCTC 2599 / NRRL B-3711)).